The sequence spans 116 residues: uncharacterized protein (116 aa).

This is an uncharacterized protein from Acidianus filamentous virus 1 (isolate United States/Yellowstone) (AFV-1).